The sequence spans 126 residues: Histone H2B type 1-J (126 aa).

The segment covering 1–12 (MPEPAKSAPAPK) has biased composition (low complexity). The tract at residues 1-35 (MPEPAKSAPAPKKGSKKAVTKAQKKDGKKRKRSRK) is disordered. Proline 2 is modified (N-acetylproline). Glutamate 3 bears the ADP-ribosyl glutamic acid mark. An N6-(2-hydroxyisobutyryl)lysine; alternate modification is found at lysine 6. Lysine 6 is subject to N6-(beta-hydroxybutyryl)lysine; alternate. Residue lysine 6 is modified to N6-acetyllysine; alternate. Lysine 6 carries the post-translational modification N6-butyryllysine; alternate. N6-crotonyllysine; alternate is present on lysine 6. N6-lactoyllysine; alternate is present on lysine 6. Lysine 6 participates in a covalent cross-link: Glycyl lysine isopeptide (Lys-Gly) (interchain with G-Cter in SUMO2); alternate. At serine 7 the chain carries ADP-ribosylserine. Lysine 12 is modified (N6-(beta-hydroxybutyryl)lysine; alternate). N6-acetyllysine; alternate is present on residues lysine 12 and lysine 13. N6-crotonyllysine; alternate occurs at positions 12 and 13. At lysine 12 the chain carries N6-lactoyllysine; alternate. Lysine 13 bears the N6-(2-hydroxyisobutyryl)lysine; alternate mark. At serine 15 the chain carries Phosphoserine; by STK4/MST1. Lysine 16, lysine 17, lysine 21, and lysine 24 each carry N6-acetyllysine; alternate. 4 positions are modified to N6-crotonyllysine; alternate: lysine 16, lysine 17, lysine 21, and lysine 24. Residues lysine 16, lysine 17, lysine 21, and lysine 24 each carry the N6-lactoyllysine; alternate modification. Residues lysine 17 and lysine 21 each carry the N6-(beta-hydroxybutyryl)lysine; alternate modification. Position 17 is an N6-glutaryllysine; alternate (lysine 17). N6-(2-hydroxyisobutyryl)lysine; alternate is present on residues lysine 21 and lysine 24. An N6-butyryllysine; alternate modification is found at lysine 21. Lysine 21 participates in a covalent cross-link: Glycyl lysine isopeptide (Lys-Gly) (interchain with G-Cter in SUMO2); alternate. At lysine 25 the chain carries N6-(2-hydroxyisobutyryl)lysine. The residue at position 35 (lysine 35) is an N6-(2-hydroxyisobutyryl)lysine; alternate. Lysine 35 is subject to N6-(beta-hydroxybutyryl)lysine; alternate. Lysine 35 carries the N6-crotonyllysine; alternate modification. Lysine 35 is modified (N6-glutaryllysine; alternate). N6-succinyllysine; alternate is present on lysine 35. Residue lysine 35 forms a Glycyl lysine isopeptide (Lys-Gly) (interchain with G-Cter in ubiquitin); alternate linkage. The residue at position 36 (glutamate 36) is a PolyADP-ribosyl glutamic acid. Serine 37 carries the post-translational modification Phosphoserine; by AMPK. Lysine 44, lysine 47, and lysine 58 each carry N6-(2-hydroxyisobutyryl)lysine; alternate. Lysine 44 carries the post-translational modification N6-lactoyllysine; alternate. 2 positions are modified to N6-glutaryllysine; alternate: lysine 44 and lysine 47. Lysine 47 bears the N6-methyllysine; alternate mark. Lysine 58 is subject to N6,N6-dimethyllysine; alternate. At arginine 80 the chain carries Dimethylated arginine. Lysine 86 carries the N6-(2-hydroxyisobutyryl)lysine; alternate modification. Lysine 86 bears the N6-(beta-hydroxybutyryl)lysine; alternate mark. Lysine 86 is subject to N6-acetyllysine; alternate. Residue lysine 86 is modified to N6-lactoyllysine; alternate. Position 86 is an N6,N6,N6-trimethyllysine; alternate (lysine 86). Omega-N-methylarginine occurs at positions 87 and 93. Lysine 109 is subject to N6-(2-hydroxyisobutyryl)lysine; alternate. Residue lysine 109 is modified to N6-lactoyllysine; alternate. N6-glutaryllysine; alternate is present on lysine 109. Residue lysine 109 is modified to N6-methyllysine; alternate. O-linked (GlcNAc) serine glycosylation occurs at serine 113. Threonine 116 carries the phosphothreonine modification. 2 positions are modified to N6-(2-hydroxyisobutyryl)lysine; alternate: lysine 117 and lysine 121. Lysine 117 and lysine 121 each carry N6-(beta-hydroxybutyryl)lysine; alternate. N6-lactoyllysine; alternate is present on residues lysine 117 and lysine 121. 2 positions are modified to N6-glutaryllysine; alternate: lysine 117 and lysine 121. N6-succinyllysine; alternate is present on residues lysine 117 and lysine 121. Lysine 117 is subject to N6-malonyllysine; alternate. Lysine 117 is modified (N6-methylated lysine; alternate). Lysine 121 participates in a covalent cross-link: Glycyl lysine isopeptide (Lys-Gly) (interchain with G-Cter in ubiquitin); alternate.

It belongs to the histone H2B family. In terms of assembly, the nucleosome is a histone octamer containing two molecules each of H2A, H2B, H3 and H4 assembled in one H3-H4 heterotetramer and two H2A-H2B heterodimers. The octamer wraps approximately 147 bp of DNA. Heterodimer H2BC11 and H2AZ1 interacts with VPS72 (via N-terminal domain). Post-translationally, monoubiquitination at Lys-35 (H2BK34Ub) by the MSL1/MSL2 dimer is required for histone H3 'Lys-4' (H3K4me) and 'Lys-79' (H3K79me) methylation and transcription activation at specific gene loci, such as HOXA9 and MEIS1 loci. Similarly, monoubiquitination at Lys-121 (H2BK120Ub) by the RNF20/40 complex gives a specific tag for epigenetic transcriptional activation and is also prerequisite for histone H3 'Lys-4' and 'Lys-79' methylation. It also functions cooperatively with the FACT dimer to stimulate elongation by RNA polymerase II. H2BK120Ub also acts as a regulator of mRNA splicing: deubiquitination by USP49 is required for efficient cotranscriptional splicing of a large set of exons. Phosphorylation at Ser-37 (H2BS36ph) by AMPK in response to stress promotes transcription. Phosphorylated on Ser-15 (H2BS14ph) by STK4/MST1 during apoptosis; which facilitates apoptotic chromatin condensation. Also phosphorylated on Ser-15 in response to DNA double strand breaks (DSBs), and in correlation with somatic hypermutation and immunoglobulin class-switch recombination. In terms of processing, glcNAcylation at Ser-113 promotes monoubiquitination of Lys-121. It fluctuates in response to extracellular glucose, and associates with transcribed genes. Post-translationally, ADP-ribosylated by PARP1 or PARP2 on Ser-7 (H2BS6ADPr) in response to DNA damage. H2BS6ADPr promotes recruitment of CHD1L. Mono-ADP-ribosylated on Glu-3 (H2BE2ADPr) by PARP3 in response to single-strand breaks. Poly ADP-ribosylation on Glu-36 (H2BE35ADPr) by PARP1 regulates adipogenesis: it inhibits phosphorylation at Ser-37 (H2BS36ph), thereby blocking expression of pro-adipogenetic genes. Crotonylation (Kcr) is specifically present in male germ cells and marks testis-specific genes in post-meiotic cells, including X-linked genes that escape sex chromosome inactivation in haploid cells. Crotonylation marks active promoters and enhancers and confers resistance to transcriptional repressors. It is also associated with post-meiotically activated genes on autosomes. In terms of processing, lactylated in macrophages by EP300/P300 by using lactoyl-CoA directly derived from endogenous or exogenous lactate, leading to stimulates gene transcription.

It localises to the nucleus. The protein resides in the chromosome. Its function is as follows. Core component of nucleosome. Nucleosomes wrap and compact DNA into chromatin, limiting DNA accessibility to the cellular machineries which require DNA as a template. Histones thereby play a central role in transcription regulation, DNA repair, DNA replication and chromosomal stability. DNA accessibility is regulated via a complex set of post-translational modifications of histones, also called histone code, and nucleosome remodeling. Functionally, has broad antibacterial activity. May contribute to the formation of the functional antimicrobial barrier of the colonic epithelium, and to the bactericidal activity of amniotic fluid. In Homo sapiens (Human), this protein is Histone H2B type 1-J.